We begin with the raw amino-acid sequence, 849 residues long: Glycogen phosphorylase (849 aa).

Residue lysine 679 is modified to N6-(pyridoxal phosphate)lysine.

It belongs to the glycogen phosphorylase family. Requires pyridoxal 5'-phosphate as cofactor.

The enzyme catalyses [(1-&gt;4)-alpha-D-glucosyl](n) + phosphate = [(1-&gt;4)-alpha-D-glucosyl](n-1) + alpha-D-glucose 1-phosphate. Its function is as follows. Phosphorylase is an important allosteric enzyme in carbohydrate metabolism. Enzymes from different sources differ in their regulatory mechanisms and in their natural substrates. However, all known phosphorylases share catalytic and structural properties. The sequence is that of Glycogen phosphorylase (glgP) from Synechocystis sp. (strain ATCC 27184 / PCC 6803 / Kazusa).